Here is a 372-residue protein sequence, read N- to C-terminus: Protein-glutamate methylesterase/protein-glutamine glutaminase (372 aa).

The Response regulatory domain maps to arginine 5–threonine 123. Aspartate 56 is subject to 4-aspartylphosphate. The span at glycine 140–serine 151 shows a compositional bias: polar residues. The segment at glycine 140–arginine 177 is disordered. A compositionally biased stretch (basic and acidic residues) spans proline 167–arginine 177. The CheB-type methylesterase domain occupies glutamate 178–isoleucine 364. Catalysis depends on residues serine 190, histidine 217, and aspartate 313.

It belongs to the CheB family. Phosphorylated by CheA. Phosphorylation of the N-terminal regulatory domain activates the methylesterase activity.

The protein localises to the cytoplasm. It catalyses the reaction [protein]-L-glutamate 5-O-methyl ester + H2O = L-glutamyl-[protein] + methanol + H(+). The catalysed reaction is L-glutaminyl-[protein] + H2O = L-glutamyl-[protein] + NH4(+). In terms of biological role, involved in chemotaxis. Part of a chemotaxis signal transduction system that modulates chemotaxis in response to various stimuli. Catalyzes the demethylation of specific methylglutamate residues introduced into the chemoreceptors (methyl-accepting chemotaxis proteins or MCP) by CheR. Also mediates the irreversible deamidation of specific glutamine residues to glutamic acid. The protein is Protein-glutamate methylesterase/protein-glutamine glutaminase of Treponema denticola (strain ATCC 35405 / DSM 14222 / CIP 103919 / JCM 8153 / KCTC 15104).